A 130-amino-acid polypeptide reads, in one-letter code: Protein ApaG (130 aa).

Positions 3-127 (RALTRDIEVT…FSLDSPGLMR (125 aa)) constitute an ApaG domain.

The sequence is that of Protein ApaG from Agrobacterium fabrum (strain C58 / ATCC 33970) (Agrobacterium tumefaciens (strain C58)).